We begin with the raw amino-acid sequence, 445 residues long: Phosphoglucosamine mutase (445 aa).

Catalysis depends on S99, which acts as the Phosphoserine intermediate. Mg(2+)-binding residues include S99, D242, D244, and D246. S99 bears the Phosphoserine mark.

This sequence belongs to the phosphohexose mutase family. Mg(2+) is required as a cofactor. In terms of processing, activated by phosphorylation.

The enzyme catalyses alpha-D-glucosamine 1-phosphate = D-glucosamine 6-phosphate. Its function is as follows. Catalyzes the conversion of glucosamine-6-phosphate to glucosamine-1-phosphate. This Helicobacter pylori (strain Shi470) protein is Phosphoglucosamine mutase.